The sequence spans 85 residues: Putative membrane protein insertion efficiency factor (85 aa).

It belongs to the UPF0161 family.

It localises to the cell inner membrane. Its function is as follows. Could be involved in insertion of integral membrane proteins into the membrane. This is Putative membrane protein insertion efficiency factor from Fervidobacterium nodosum (strain ATCC 35602 / DSM 5306 / Rt17-B1).